A 255-amino-acid chain; its full sequence is RNA polymerase sigma-F factor (255 aa).

A Polymerase core binding motif is present at residues 61–74 (DLFQIGCIGLLKSV). The H-T-H motif DNA-binding region spans 221-240 (QSEVADRLGISQVQVSRLEK).

It belongs to the sigma-70 factor family.

Its function is as follows. Sigma factors are initiation factors that promote the attachment of RNA polymerase to specific initiation sites and are then released. This sigma factor is responsible for the expression of sporulation specific genes. This chain is RNA polymerase sigma-F factor (sigF), found in Bacillus licheniformis.